A 43-amino-acid chain; its full sequence is Protein PsbN (43 aa).

A helical membrane pass occupies residues 7–27 (VAIFISCLLVSFTGYALYTAF).

Belongs to the PsbN family.

Its subcellular location is the plastid. It localises to the chloroplast thylakoid membrane. Its function is as follows. May play a role in photosystem I and II biogenesis. The chain is Protein PsbN from Zygnema circumcarinatum (Green alga).